A 522-amino-acid polypeptide reads, in one-letter code: Glutamate--cysteine ligase, chloroplastic (522 aa).

The transit peptide at 1 to 45 directs the protein to the chloroplast; it reads MALMSQAGSSHCIYSEKMKCISGHSSITSNMEMLKMKDICFGNIS. A disulfide bridge connects residues cysteine 186 and cysteine 406.

It belongs to the carboxylate-amine ligase family. Glutamate--cysteine ligase type 2 subfamily. In terms of assembly, homodimer or monomer when oxidized or reduced, respectively. In terms of processing, the Cys-186-Cys-406 disulfide bridge is known to modulate the enzyme activity according to the redox status. The oxidized form constitutes the active enzyme.

Its subcellular location is the plastid. The protein localises to the chloroplast. The catalysed reaction is L-cysteine + L-glutamate + ATP = gamma-L-glutamyl-L-cysteine + ADP + phosphate + H(+). Its pathway is sulfur metabolism; glutathione biosynthesis; glutathione from L-cysteine and L-glutamate: step 1/2. This chain is Glutamate--cysteine ligase, chloroplastic (GSH1), found in Nicotiana tabacum (Common tobacco).